The primary structure comprises 157 residues: Transcription elongation factor GreA (157 aa).

Residues 17-37 (ELERLLKLRPQISEAIAEARE) adopt a coiled-coil conformation.

Belongs to the GreA/GreB family.

In terms of biological role, necessary for efficient RNA polymerase transcription elongation past template-encoded arresting sites. The arresting sites in DNA have the property of trapping a certain fraction of elongating RNA polymerases that pass through, resulting in locked ternary complexes. Cleavage of the nascent transcript by cleavage factors such as GreA or GreB allows the resumption of elongation from the new 3'terminus. GreA releases sequences of 2 to 3 nucleotides. This is Transcription elongation factor GreA from Vibrio parahaemolyticus serotype O3:K6 (strain RIMD 2210633).